The primary structure comprises 331 residues: UPF0329 protein ECU01_0080/ECU01_1530/ECU02_1560/ECU04_0090/ECU08_0010/ECU08_2090 (331 aa).

Residues 305–320 show a composition bias toward basic and acidic residues; sequence QRSEMEKRDREQDPER. The tract at residues 305–331 is disordered; it reads QRSEMEKRDREQDPERRRLRARRVGSL. Residues 321–331 show a composition bias toward basic residues; it reads RRLRARRVGSL.

The protein belongs to the UPF0329 family.

The polypeptide is UPF0329 protein ECU01_0080/ECU01_1530/ECU02_1560/ECU04_0090/ECU08_0010/ECU08_2090 (Encephalitozoon cuniculi (strain GB-M1) (Microsporidian parasite)).